A 113-amino-acid chain; its full sequence is Dolichyl-diphosphooligosaccharide--protein glycosyltransferase subunit DAD1 (113 aa).

The residue at position 2 (S2) is an N-acetylserine. The Cytoplasmic portion of the chain corresponds to S2 to Y30. Residues L31 to F51 form a helical membrane-spanning segment. P52 is a topological domain (lumenal). Residues F53–L73 traverse the membrane as a helical segment. At R74–R92 the chain is on the cytoplasmic side. Residues A93–G113 traverse the membrane as a helical segment.

It belongs to the DAD/OST2 family. Component of the oligosaccharyltransferase (OST) complex. OST exists in two different complex forms which contain common core subunits RPN1, RPN2, OST48, OST4, DAD1 and TMEM258, either STT3A or STT3B as catalytic subunits, and form-specific accessory subunits. STT3A complex assembly occurs through the formation of 3 subcomplexes. Subcomplex 1 contains RPN1 and TMEM258, subcomplex 2 contains the STT3A-specific subunits STT3A, DC2/OSTC, and KCP2 as well as the core subunit OST4, and subcomplex 3 contains RPN2, DAD1, and OST48. The STT3A complex can form stable complexes with the Sec61 complex or with both the Sec61 and TRAP complexes.

Its subcellular location is the endoplasmic reticulum membrane. It participates in protein modification; protein glycosylation. Its function is as follows. Subunit of the oligosaccharyl transferase (OST) complex that catalyzes the initial transfer of a defined glycan (Glc(3)Man(9)GlcNAc(2) in eukaryotes) from the lipid carrier dolichol-pyrophosphate to an asparagine residue within an Asn-X-Ser/Thr consensus motif in nascent polypeptide chains, the first step in protein N-glycosylation. N-glycosylation occurs cotranslationally and the complex associates with the Sec61 complex at the channel-forming translocon complex that mediates protein translocation across the endoplasmic reticulum (ER). All subunits are required for a maximal enzyme activity. The sequence is that of Dolichyl-diphosphooligosaccharide--protein glycosyltransferase subunit DAD1 from Pongo abelii (Sumatran orangutan).